Reading from the N-terminus, the 334-residue chain is Glyceraldehyde-3-phosphate dehydrogenase (334 aa).

NAD(+) contacts are provided by residues 12–13 (TI) and G111. 140–142 (SCN) is a D-glyceraldehyde 3-phosphate binding site. Catalysis depends on C141, which acts as the Nucleophile. An NAD(+)-binding site is contributed by R167. Residue 192-193 (HG) coordinates D-glyceraldehyde 3-phosphate. Q298 contacts NAD(+).

This sequence belongs to the glyceraldehyde-3-phosphate dehydrogenase family. As to quaternary structure, homotetramer.

The protein localises to the cytoplasm. The enzyme catalyses D-glyceraldehyde 3-phosphate + phosphate + NADP(+) = (2R)-3-phospho-glyceroyl phosphate + NADPH + H(+). It carries out the reaction D-glyceraldehyde 3-phosphate + phosphate + NAD(+) = (2R)-3-phospho-glyceroyl phosphate + NADH + H(+). The protein operates within carbohydrate degradation; glycolysis; pyruvate from D-glyceraldehyde 3-phosphate: step 1/5. This chain is Glyceraldehyde-3-phosphate dehydrogenase, found in Thermococcus sibiricus (strain DSM 12597 / MM 739).